We begin with the raw amino-acid sequence, 449 residues long: Na(+)/H(+) antiporter NhaA 1 (449 aa).

A run of 11 helical transmembrane segments spans residues 38-58, 79-99, 117-137, 145-165, 175-195, 198-218, 240-260, 311-331, 347-367, 390-410, and 422-442; these read GILL…PWAA, FTIR…VVGM, VLPL…YAAF, AGWA…LTLV, VFLT…IALF, SGLH…LACL, MHHG…FMPA, FVHL…ALAN, PLPL…IFLF, GVAV…GLAF, and LGIL…LRFV.

The protein belongs to the NhaA Na(+)/H(+) (TC 2.A.33) antiporter family.

It localises to the cell inner membrane. The catalysed reaction is Na(+)(in) + 2 H(+)(out) = Na(+)(out) + 2 H(+)(in). Na(+)/H(+) antiporter that extrudes sodium in exchange for external protons. The chain is Na(+)/H(+) antiporter NhaA 1 from Myxococcus xanthus (strain DK1622).